The chain runs to 397 residues: Tryptophan synthase beta chain (397 aa).

Residue K87 is modified to N6-(pyridoxal phosphate)lysine.

It belongs to the TrpB family. As to quaternary structure, tetramer of two alpha and two beta chains. It depends on pyridoxal 5'-phosphate as a cofactor.

It catalyses the reaction (1S,2R)-1-C-(indol-3-yl)glycerol 3-phosphate + L-serine = D-glyceraldehyde 3-phosphate + L-tryptophan + H2O. Its pathway is amino-acid biosynthesis; L-tryptophan biosynthesis; L-tryptophan from chorismate: step 5/5. In terms of biological role, the beta subunit is responsible for the synthesis of L-tryptophan from indole and L-serine. The chain is Tryptophan synthase beta chain from Citrobacter koseri (strain ATCC BAA-895 / CDC 4225-83 / SGSC4696).